The chain runs to 414 residues: CCA-adding enzyme (414 aa).

Residues glycine 8 and arginine 11 each contribute to the ATP site. Glycine 8 and arginine 11 together coordinate CTP. Aspartate 21 and aspartate 23 together coordinate Mg(2+). Positions 91, 137, and 140 each coordinate ATP. Residues arginine 91, arginine 137, and arginine 140 each contribute to the CTP site.

It belongs to the tRNA nucleotidyltransferase/poly(A) polymerase family. Bacterial CCA-adding enzyme type 2 subfamily. Mg(2+) is required as a cofactor.

The catalysed reaction is a tRNA precursor + 2 CTP + ATP = a tRNA with a 3' CCA end + 3 diphosphate. The enzyme catalyses a tRNA with a 3' CCA end + 2 CTP + ATP = a tRNA with a 3' CCACCA end + 3 diphosphate. Its function is as follows. Catalyzes the addition and repair of the essential 3'-terminal CCA sequence in tRNAs without using a nucleic acid template. Adds these three nucleotides in the order of C, C, and A to the tRNA nucleotide-73, using CTP and ATP as substrates and producing inorganic pyrophosphate. tRNA 3'-terminal CCA addition is required both for tRNA processing and repair. Also involved in tRNA surveillance by mediating tandem CCA addition to generate a CCACCA at the 3' terminus of unstable tRNAs. While stable tRNAs receive only 3'-terminal CCA, unstable tRNAs are marked with CCACCA and rapidly degraded. This chain is CCA-adding enzyme, found in Buchnera aphidicola subsp. Acyrthosiphon pisum (strain 5A).